A 591-amino-acid polypeptide reads, in one-letter code: Uncoordinated protein 58 (591 aa).

Residues 1-24 (MFFYSPNVAPQPSSTSHRRPTLTH) are disordered. Residues 184–204 (VILVSVLIGYLCLGAWILMLL) form a helical membrane-spanning segment. A glycan (N-linked (GlcNAc...) asparagine) is linked at Asn-226. The next 5 membrane-spanning stretches (helical) occupy residues 289 to 309 (TFPT…YGEV), 318 to 338 (VFSV…AADI), 400 to 420 (PIGA…AMFI), 428 to 448 (FIHA…GDIV), and 453 to 473 (IFLS…TMCV).

This sequence belongs to the two pore domain potassium channel (TC 1.A.1.8) family.

The protein resides in the membrane. In terms of biological role, has a role in mobility, possibly in the transport of potassium in muscles. This chain is Uncoordinated protein 58, found in Caenorhabditis elegans.